Here is a 157-residue protein sequence, read N- to C-terminus: MAKVESFTLDHTKVKAPYVRLITEETGKKGDVISNYDLRLVQPNTNAIPTAGLHTIEHLLAGLLRDRLDGVIDCSPFGCRTGFHLITWGEHSTTEVAKALKGSLDAIANDIEWKDVQGTDKYSCGNYRDHSLFSAKEWSKEILSQGISDQPFERHVI.

The Fe cation site is built by H54, H58, and C124.

It belongs to the LuxS family. As to quaternary structure, homodimer. The cofactor is Fe cation.

It carries out the reaction S-(5-deoxy-D-ribos-5-yl)-L-homocysteine = (S)-4,5-dihydroxypentane-2,3-dione + L-homocysteine. Involved in the synthesis of autoinducer 2 (AI-2) which is secreted by bacteria and is used to communicate both the cell density and the metabolic potential of the environment. The regulation of gene expression in response to changes in cell density is called quorum sensing. Catalyzes the transformation of S-ribosylhomocysteine (RHC) to homocysteine (HC) and 4,5-dihydroxy-2,3-pentadione (DPD). The protein is S-ribosylhomocysteine lyase 2 of Lactobacillus delbrueckii subsp. bulgaricus (strain ATCC BAA-365 / Lb-18).